Reading from the N-terminus, the 450-residue chain is Saccharopine dehydrogenase [NADP(+), L-glutamate-forming] (450 aa).

Residues 11 to 14, 33 to 35, 55 to 56, isoleucine 76, 98 to 99, 125 to 127, and serine 175 contribute to the NADP(+) site; these read SGFV, CRT, DV, TS, and LDP. Residues 99 to 100 and aspartate 126 contribute to the L-saccharopine site; that span reads SY. L-saccharopine is bound by residues arginine 224 and 245-247; that span reads TLR.

The protein belongs to the saccharopine dehydrogenase family. In terms of assembly, homodimer.

It catalyses the reaction L-saccharopine + NADP(+) + H2O = (S)-2-amino-6-oxohexanoate + L-glutamate + NADPH + H(+). Its pathway is amino-acid biosynthesis; L-lysine biosynthesis via AAA pathway; L-lysine from L-alpha-aminoadipate (fungal route): step 2/3. This chain is Saccharopine dehydrogenase [NADP(+), L-glutamate-forming] (LYS3), found in Pyricularia oryzae (strain 70-15 / ATCC MYA-4617 / FGSC 8958) (Rice blast fungus).